Reading from the N-terminus, the 669-residue chain is DNA ligase (669 aa).

NAD(+)-binding positions include 34-38, 83-84, and glutamate 117; these read DAEYD and SL. Catalysis depends on lysine 119, which acts as the N6-AMP-lysine intermediate. Residues arginine 140, glutamate 177, lysine 293, and lysine 317 each coordinate NAD(+). Residues cysteine 411, cysteine 414, cysteine 429, and cysteine 434 each coordinate Zn(2+). The BRCT domain occupies 591–669; the sequence is RLGGRFTGKT…EDEFLKMLEG (79 aa).

This sequence belongs to the NAD-dependent DNA ligase family. LigA subfamily. Mg(2+) serves as cofactor. Mn(2+) is required as a cofactor.

The catalysed reaction is NAD(+) + (deoxyribonucleotide)n-3'-hydroxyl + 5'-phospho-(deoxyribonucleotide)m = (deoxyribonucleotide)n+m + AMP + beta-nicotinamide D-nucleotide.. Functionally, DNA ligase that catalyzes the formation of phosphodiester linkages between 5'-phosphoryl and 3'-hydroxyl groups in double-stranded DNA using NAD as a coenzyme and as the energy source for the reaction. It is essential for DNA replication and repair of damaged DNA. This Geotalea daltonii (strain DSM 22248 / JCM 15807 / FRC-32) (Geobacter daltonii) protein is DNA ligase.